A 339-amino-acid polypeptide reads, in one-letter code: Cullin-associated NEDD8-dissociated protein 1, N-terminal part (339 aa).

HEAT repeat units follow at residues 5 to 42 (HTIQ…NPCS) and 50 to 87 (ASAT…RLPL).

In terms of assembly, interacts with candA-C. Interacts with unneddylated cullins culA and culD; interaction occurs only when complexed with candA-C.

The protein localises to the nucleus. Functionally, assembly factor of SCF (SKP1-CUL1-F-box protein) E3 ubiquitin ligase complexes that promotes the exchange of the substrate-recognition F-box subunit in SCF complexes, thereby playing a key role in the cellular repertoire of SCF complexes. Acts as a F-box protein exchange factor when interacting with candA-C. This is Cullin-associated NEDD8-dissociated protein 1, N-terminal part (candA-N) from Emericella nidulans (strain FGSC A4 / ATCC 38163 / CBS 112.46 / NRRL 194 / M139) (Aspergillus nidulans).